Reading from the N-terminus, the 250-residue chain is Putative B3 domain-containing protein At4g03170 (250 aa).

Residues 1-12 (MANSTGKPTSST) show a composition bias toward polar residues. Positions 1-90 (MANSTGKPTS…EKNQPKRFKK (90 aa)) are disordered. A compositionally biased stretch (acidic residues) spans 34–56 (DREEDIDDEDDIDDEVIDDEDYE). Basic and acidic residues predominate over residues 72–84 (QSREREEETEKNQ). Positions 137 to 245 (KKQLMSSDVD…KLCFAIHYVK (109 aa)) form a DNA-binding region, TF-B3.

It is found in the nucleus. The polypeptide is Putative B3 domain-containing protein At4g03170 (Arabidopsis thaliana (Mouse-ear cress)).